The following is a 246-amino-acid chain: Large ribosomal subunit protein uL3 (246 aa).

At Q151 the chain carries N5-methylglutamine.

It belongs to the universal ribosomal protein uL3 family. In terms of assembly, part of the 50S ribosomal subunit. Forms a cluster with proteins L14 and L19. In terms of processing, methylated by PrmB.

One of the primary rRNA binding proteins, it binds directly near the 3'-end of the 23S rRNA, where it nucleates assembly of the 50S subunit. The polypeptide is Large ribosomal subunit protein uL3 (Bartonella quintana (strain Toulouse) (Rochalimaea quintana)).